The following is a 274-amino-acid chain: Rhamnulose-1-phosphate aldolase (274 aa).

Glutamate 117 is an active-site residue. Histidine 141, histidine 143, and histidine 212 together coordinate Zn(2+).

The protein belongs to the aldolase class II family. RhaD subfamily. Homotetramer. Zn(2+) serves as cofactor.

It localises to the cytoplasm. The catalysed reaction is L-rhamnulose 1-phosphate = (S)-lactaldehyde + dihydroxyacetone phosphate. It participates in carbohydrate degradation; L-rhamnose degradation; glycerone phosphate from L-rhamnose: step 3/3. Its function is as follows. Catalyzes the reversible cleavage of L-rhamnulose-1-phosphate to dihydroxyacetone phosphate (DHAP) and L-lactaldehyde. This is Rhamnulose-1-phosphate aldolase from Escherichia coli O7:K1 (strain IAI39 / ExPEC).